A 732-amino-acid chain; its full sequence is 1,4-alpha-glucan branching enzyme GlgB 2 (732 aa).

Asp-413 serves as the catalytic Nucleophile. The Proton donor role is filled by Glu-466.

It belongs to the glycosyl hydrolase 13 family. GlgB subfamily. As to quaternary structure, monomer.

It carries out the reaction Transfers a segment of a (1-&gt;4)-alpha-D-glucan chain to a primary hydroxy group in a similar glucan chain.. Its pathway is glycan biosynthesis; glycogen biosynthesis. Its function is as follows. Catalyzes the formation of the alpha-1,6-glucosidic linkages in glycogen by scission of a 1,4-alpha-linked oligosaccharide from growing alpha-1,4-glucan chains and the subsequent attachment of the oligosaccharide to the alpha-1,6 position. The sequence is that of 1,4-alpha-glucan branching enzyme GlgB 2 from Rhizobium etli (strain ATCC 51251 / DSM 11541 / JCM 21823 / NBRC 15573 / CFN 42).